A 694-amino-acid chain; its full sequence is GRB2-associated-binding protein 1 (694 aa).

S2 bears the N-acetylserine mark. Residues 5-116 (EVVCSGWLRK…WVRCICDICG (112 aa)) enclose the PH domain. Basic and acidic residues predominate over residues 194 to 203 (PEPTRTHADS). Positions 194-231 (PEPTRTHADSAKSTSSETDCNDNVPSHKNPASSQSKHG) are disordered. The segment covering 204–230 (AKSTSSETDCNDNVPSHKNPASSQSKH) has biased composition (polar residues). 4 positions are modified to phosphoserine: S251, S253, S266, and S304. Residues 309 to 378 (IPPTPGNTYQ…TDSSYCIPTA (70 aa)) form a disordered region. Positions 358–374 (DTCSITRTASDTDSSYC) are enriched in polar residues. T387 carries the post-translational modification Phosphothreonine. S402 and S454 each carry phosphoserine. Disordered stretches follow at residues 492–532 (PAHM…VKPA) and 560–656 (DSSR…ADER). Positions 594 to 611 (PNLSSEDSNLFGSNSLDG) are enriched in polar residues. Y627 bears the Phosphotyrosine mark. T638 carries the post-translational modification Phosphothreonine. S651 bears the Phosphoserine mark. The residue at position 659 (Y659) is a Phosphotyrosine. The interval 668–694 (LALKSTREAWTDGRQSTESETPAKNVK) is disordered. Basic and acidic residues predominate over residues 672–684 (STREAWTDGRQST). At S683 the chain carries Phosphoserine. Positions 685–694 (ESETPAKNVK) are enriched in polar residues.

Belongs to the GAB family. Identified in a complex containing FRS2, GRB2, GAB1, PIK3R1 and SOS1. Forms a tripartite complex containing GAB1, METTL13 and SPRY2. Within the complex interacts with METTL13. Interacts with GRB2 and with other SH2-containing proteins. Interacts with phosphorylated LAT2. Interacts with PTPRJ. Interacts (phosphorylated) with PTPN11. Interacts with HCK. In terms of processing, phosphorylated in response to FGFR1 activation. Phosphorylated on tyrosine residue(s) by the epidermal growth factor receptor (EGFR) and the insulin receptor (INSR). Tyrosine phosphorylation of GAB1 mediates interaction with several proteins that contain SH2 domains. Phosphorylated on tyrosine residues by HCK upon IL6 signaling.

Its function is as follows. Adapter protein that plays a role in intracellular signaling cascades triggered by activated receptor-type kinases. Plays a role in FGFR1 signaling. Probably involved in signaling by the epidermal growth factor receptor (EGFR) and the insulin receptor (INSR). Involved in the MET/HGF-signaling pathway. In Bos taurus (Bovine), this protein is GRB2-associated-binding protein 1 (GAB1).